Here is a 133-residue protein sequence, read N- to C-terminus: Fluoride-specific ion channel FluC (133 aa).

The next 4 helical transmembrane spans lie at Leu-4–Leu-24, Trp-35–Ala-55, Val-66–Ser-86, and Val-107–Pro-127. Na(+) contacts are provided by Gly-74 and Thr-77.

This sequence belongs to the fluoride channel Fluc/FEX (TC 1.A.43) family.

It localises to the cell inner membrane. The catalysed reaction is fluoride(in) = fluoride(out). Na(+) is not transported, but it plays an essential structural role and its presence is essential for fluoride channel function. In terms of biological role, fluoride-specific ion channel. Important for reducing fluoride concentration in the cell, thus reducing its toxicity. This chain is Fluoride-specific ion channel FluC, found in Salinibacter ruber (strain DSM 13855 / M31).